A 954-amino-acid chain; its full sequence is Regulatory protein FlaEY (954 aa).

Functionally, functions in trans to modulate the level of transcription of the flagellin genes and several genes encoding chemotaxis functions. It is itself temporally controlled. This chain is Regulatory protein FlaEY (flaEY), found in Caulobacter vibrioides (strain ATCC 19089 / CIP 103742 / CB 15) (Caulobacter crescentus).